We begin with the raw amino-acid sequence, 88 residues long: Kunitz-type U15-theraphotoxin-Hs1e (88 aa).

An N-terminal signal peptide occupies residues 1–27 (MGTARFLSAVLLLSVLLMVTFPALLSA). Positions 28 to 33 (EYHDGR) are excised as a propeptide. The 49-residue stretch at 37–85 (CSLPSDSGDRLRFFEMWYFDGTTCTKFVYGGYGGNDNRFPTEKACMKRC) folds into the BPTI/Kunitz inhibitor domain. Intrachain disulfides connect Cys-37–Cys-85 and Cys-60–Cys-81.

Belongs to the venom Kunitz-type family. 03 (sub-Kunitz) subfamily. Expressed by the venom gland.

The protein localises to the secreted. In terms of biological role, serine protease inhibitor that inhibits trypsin (Ki=9.61 nM), kallikrein (Ki=24.8 nM), and chymotrypsin. This chain is Kunitz-type U15-theraphotoxin-Hs1e, found in Cyriopagopus schmidti (Chinese bird spider).